We begin with the raw amino-acid sequence, 155 residues long: SsrA-binding protein (155 aa).

Belongs to the SmpB family.

The protein resides in the cytoplasm. Functionally, required for rescue of stalled ribosomes mediated by trans-translation. Binds to transfer-messenger RNA (tmRNA), required for stable association of tmRNA with ribosomes. tmRNA and SmpB together mimic tRNA shape, replacing the anticodon stem-loop with SmpB. tmRNA is encoded by the ssrA gene; the 2 termini fold to resemble tRNA(Ala) and it encodes a 'tag peptide', a short internal open reading frame. During trans-translation Ala-aminoacylated tmRNA acts like a tRNA, entering the A-site of stalled ribosomes, displacing the stalled mRNA. The ribosome then switches to translate the ORF on the tmRNA; the nascent peptide is terminated with the 'tag peptide' encoded by the tmRNA and targeted for degradation. The ribosome is freed to recommence translation, which seems to be the essential function of trans-translation. In Bacillus mycoides (strain KBAB4) (Bacillus weihenstephanensis), this protein is SsrA-binding protein.